We begin with the raw amino-acid sequence, 360 residues long: MRTLNVALGDRSYPIHIGAGLLARPELIVPLLRTPRVAIVTNTVVGPLYLERLTAGLESHGIAVSTVVLPDGEAHKDWTTLNRIFDMLLESRCERSTTLLALGGGVVGDMGGFAAATYQRGMPFMQIPTTLLSQVDSSVGGKTAINHPLGKNMIGAFYQPRLVLADIEVLNTLPDRELSAGLAEVIKYGLIRDPAFYAWLEENIERLRARDPEALAYAIERSCRNKAEVVAADETEQGERALLNLGHTFGHAIETGMGYGEWLHGEAVAAGTMMAAELSRALGWLTDDDVNRIEALFVRAGLPVRAPALGIERYLELMAHDKKVESGRLRLVLLASIGKALMFGDATAGEIGAAISRRCG.

Residues 71 to 76, 105 to 109, 129 to 130, Lys142, and Lys151 contribute to the NAD(+) site; these read DGEAHK, GVVGD, and TT. 3 residues coordinate Zn(2+): Glu184, His247, and His264.

Belongs to the sugar phosphate cyclases superfamily. Dehydroquinate synthase family. It depends on Co(2+) as a cofactor. The cofactor is Zn(2+). NAD(+) serves as cofactor.

The protein resides in the cytoplasm. The enzyme catalyses 7-phospho-2-dehydro-3-deoxy-D-arabino-heptonate = 3-dehydroquinate + phosphate. It functions in the pathway metabolic intermediate biosynthesis; chorismate biosynthesis; chorismate from D-erythrose 4-phosphate and phosphoenolpyruvate: step 2/7. In terms of biological role, catalyzes the conversion of 3-deoxy-D-arabino-heptulosonate 7-phosphate (DAHP) to dehydroquinate (DHQ). The chain is 3-dehydroquinate synthase from Azoarcus sp. (strain BH72).